A 388-amino-acid chain; its full sequence is Succinate--CoA ligase [ADP-forming] subunit beta (388 aa).

The ATP-grasp domain maps to 9 to 244 (KQLFAEYGLP…PSQDDPREAH (236 aa)). ATP-binding positions include Lys-46, 53–55 (GRG), Glu-99, Thr-102, and Glu-107. Asn-199 and Asp-213 together coordinate Mg(2+). Residues Asn-264 and 321 to 323 (GIV) each bind substrate.

It belongs to the succinate/malate CoA ligase beta subunit family. Heterotetramer of two alpha and two beta subunits. Mg(2+) serves as cofactor.

The enzyme catalyses succinate + ATP + CoA = succinyl-CoA + ADP + phosphate. It catalyses the reaction GTP + succinate + CoA = succinyl-CoA + GDP + phosphate. The protein operates within carbohydrate metabolism; tricarboxylic acid cycle; succinate from succinyl-CoA (ligase route): step 1/1. Succinyl-CoA synthetase functions in the citric acid cycle (TCA), coupling the hydrolysis of succinyl-CoA to the synthesis of either ATP or GTP and thus represents the only step of substrate-level phosphorylation in the TCA. The beta subunit provides nucleotide specificity of the enzyme and binds the substrate succinate, while the binding sites for coenzyme A and phosphate are found in the alpha subunit. This is Succinate--CoA ligase [ADP-forming] subunit beta from Pseudomonas fluorescens (strain SBW25).